A 108-amino-acid chain; its full sequence is UPF0145 protein SYNPCC7002_A1337 (108 aa).

Belongs to the UPF0145 family.

This Picosynechococcus sp. (strain ATCC 27264 / PCC 7002 / PR-6) (Agmenellum quadruplicatum) protein is UPF0145 protein SYNPCC7002_A1337.